The primary structure comprises 118 residues: MKAISPVRSMSSCYQAVCCLSEQSLSIARGSSLKGAGIDETMGLLYDMNGCYSKLKELVPGIPQGSKLSQVEILQHVIDYIFDLQIVLGEDQQQNSILNLQKSDFSELATQGDARVCH.

Residues 32-84 form the bHLH domain; that stretch reads SLKGAGIDETMGLLYDMNGCYSKLKELVPGIPQGSKLSQVEILQHVIDYIFDL.

As to quaternary structure, homodimer. Heterodimer with other HLH proteins. Interacts (via HLH domain) with the bHLH protein hes4/hairy2 (via Orange domain). Interacts with stat3.

The protein localises to the nucleus. Functionally, transcriptional regulator (lacking a basic DNA binding domain) which negatively regulates the basic helix-loop-helix (bHLH) transcription factors by forming heterodimers and inhibiting their DNA binding and transcriptional activity. Influences cell fate decisions in the embryo by sequestering and blocking the activity of the bHLH transcription factors that control these decisions. Inhibits the binding of myogenic bHLH-containing complexes to E-box DNA, thereby preventing activation of muscle-specific target genes. Also inhibits the activity of neurogenic factor neurod1/neuroD. Plays a role in cell cycle progression and survival of neural crest progenitors; binding to either hes4-B/hairy2b or stat3 blocks the formation of transcription factor complexes and the repressor function of hes4-B/hairy2B, to allow neural crest progenitors to differentiate. May play a role in the regulation of the circadian rhythm. The sequence is that of DNA-binding protein inhibitor ID-3-B (id3-b) from Xenopus laevis (African clawed frog).